The sequence spans 212 residues: Prolactin (212 aa).

An N-terminal signal peptide occupies residues 1–26; the sequence is MARCCKCPRLHLAVTVLACVLVFTEG. Cystine bridges form between Cys-71–Cys-185 and Cys-202–Cys-212.

This sequence belongs to the somatotropin/prolactin family. Pituitary gland.

The protein localises to the secreted. The chain is Prolactin (prl) from Ictalurus punctatus (Channel catfish).